Reading from the N-terminus, the 838-residue chain is Leucine--tRNA ligase (838 aa).

Residues 38–48 (PYPSGKAHVGH) carry the 'HIGH' region motif. Residues 608–612 (KMSKS) carry the 'KMSKS' region motif. Lys-611 is a binding site for ATP.

Belongs to the class-I aminoacyl-tRNA synthetase family.

It localises to the cytoplasm. It catalyses the reaction tRNA(Leu) + L-leucine + ATP = L-leucyl-tRNA(Leu) + AMP + diphosphate. The chain is Leucine--tRNA ligase from Orientia tsutsugamushi (strain Boryong) (Rickettsia tsutsugamushi).